The primary structure comprises 491 residues: MYIVQIASECAPVIKAGGLGDVVYGLSRELEVRGHCVELVLPKYDTMRYDQIWGLHDAYRDLWVPWYGGAIHCSVYCGWVHGRLCFFIEPHSGDNFFNRGCYYGCPDDNMRFAFFSKAALEFLLQSNKRPDIIHCHDWQTGLVPVLLFEIYKYHGMGNQRVCYTIHNFKHQGFGGPEILWATGLNREPYYFHYDRLRDNFNPFSLNFMKGGIVFSNFVTTVSPNHALEVQFGDYGYGLGHTLYLHRHKFRGVLNGIDYDIWNPEIDRFIPVRYTAQTLENKAKNKKALRDRLLLQDVDKPIVAYIGRLDEQKGVHLVHHAIYRSLFKNAQFVLLGSATERGIGAWFAHEKSYLNNNPDVHIELGFNEELSHLIYAGADIIVVPSHYEPCGLTQMIGLKYGTVPVVRGVGGLVDTVFDRDYDPHKLPEQRNGYVFYHTDPAALESALDRAIDLWYTAPDQFRQLQIQGMSYDYSWNYPGKEYLEIYDFIRHR.

ADP-alpha-D-glucose is bound at residue K15.

This sequence belongs to the glycosyltransferase 1 family. Bacterial/plant glycogen synthase subfamily.

It carries out the reaction [(1-&gt;4)-alpha-D-glucosyl](n) + ADP-alpha-D-glucose = [(1-&gt;4)-alpha-D-glucosyl](n+1) + ADP + H(+). Its pathway is glycan biosynthesis; glycogen biosynthesis. Its function is as follows. Synthesizes alpha-1,4-glucan chains using ADP-glucose. This Synechococcus sp. (strain JA-2-3B'a(2-13)) (Cyanobacteria bacterium Yellowstone B-Prime) protein is Glycogen synthase 1.